A 343-amino-acid chain; its full sequence is Protein RecA (343 aa).

64-71 (GPESSGKT) contributes to the ATP binding site.

This sequence belongs to the RecA family.

It is found in the cytoplasm. Can catalyze the hydrolysis of ATP in the presence of single-stranded DNA, the ATP-dependent uptake of single-stranded DNA by duplex DNA, and the ATP-dependent hybridization of homologous single-stranded DNAs. It interacts with LexA causing its activation and leading to its autocatalytic cleavage. In Bacillus cereus (strain ATCC 10987 / NRS 248), this protein is Protein RecA.